A 444-amino-acid chain; its full sequence is Orexin receptor type 2 (444 aa).

A compositionally biased stretch (basic and acidic residues) spans 1-10 (MSGTKLEDSP). Residues 1-30 (MSGTKLEDSPPCRNWSSAPELNETQEPFLN) are disordered. Topologically, residues 1-54 (MSGTKLEDSPPCRNWSSAPELNETQEPFLNPTDYDDEEFLRYLWREYLHPKEYE) are extracellular. N-linked (GlcNAc...) asparagine glycans are attached at residues N14 and N22. A compositionally biased stretch (polar residues) spans 14–27 (NWSSAPELNETQEP). The interval 33-49 (DYDDEEFLRYLWREYLH) is required for response to orexin-A. The helical transmembrane segment at 55–75 (WVLIAGYIIVFVVALIGNVLV) threads the bilayer. Topologically, residues 76–88 (CVAVWKNHHMRTV) are cytoplasmic. A helical membrane pass occupies residues 89–110 (TNYFIVNLSLADVLVTITCLPA). The Extracellular segment spans residues 111–127 (TLVVDITETWFFGQSLC). A disulfide bridge connects residues C127 and C210. A helical membrane pass occupies residues 128–150 (KVIPYLQTVSVSVSVLTLSCIAL). Topologically, residues 151–170 (DRWYAICHPLMFKSTAKRAR) are cytoplasmic. A helical membrane pass occupies residues 171 to 191 (NSIVIIWIVSCIIMIPQAIVM). At 192–222 (ECSTMLPGLANKTTLFTVCDERWGGEIYPKM) the chain is on the extracellular side. A glycan (N-linked (GlcNAc...) asparagine) is linked at N202. A helical membrane pass occupies residues 223-243 (YHICFFLVTYMAPLCLMVLAY). At 244–304 (LQIFRKLWCR…QIRARRKTAR (61 aa)) the chain is on the cytoplasmic side. The helical transmembrane segment at 305 to 326 (MLMVVLLVFAICYLPISILNVL) threads the bilayer. Over 327–342 (KRVFGMFTHTEDRETV) the chain is Extracellular. A helical membrane pass occupies residues 343-366 (YAWFTFSHWLVYANSAANPIIYNF). The Cytoplasmic portion of the chain corresponds to 367–444 (LSGKFREEFK…ANGAGQLQNW (78 aa)).

Belongs to the G-protein coupled receptor 1 family.

The protein localises to the cell membrane. Nonselective, high-affinity receptor for both orexin-A and orexin-B neuropeptides. Triggers an increase in cytoplasmic Ca(2+) levels in response to orexin-A binding. The sequence is that of Orexin receptor type 2 (HCRTR2) from Sus scrofa (Pig).